A 319-amino-acid chain; its full sequence is Sphingomyelinase D (319 aa).

The signal sequence occupies residues 1 to 23 (MTPLLRTICAILCILIAVPLTFA). His-44 is an active-site residue. Mg(2+) is bound by residues Glu-64, Asp-66, and Asp-109. An SMD-tail motif is present at residues 312 to 319 (ATGADKPW).

The protein belongs to the sphingomyelinase D/phospholipase D family. Mg(2+) is required as a cofactor.

The protein localises to the secreted. It carries out the reaction a sphingomyelin + H2O = an N-acylsphing-4-enine 1-phosphate + choline + H(+). Its function is as follows. Catalyzes the hydrolysis of sphingomyelin. Sphingomyelinases D are produced by some spider in their venoms, but also by arthropods such as ticks, or pathogenic bacteria and fungi. They might play a role in pathogenicity through different mechanisms, such as membrane destabilization and host cell penetration, but also pulmonary inflammation and cutaneous lesions. In Ajellomyces capsulatus (strain G186AR / H82 / ATCC MYA-2454 / RMSCC 2432) (Darling's disease fungus), this protein is Sphingomyelinase D.